We begin with the raw amino-acid sequence, 147 residues long: Nucleoside diphosphate kinase (147 aa).

ATP contacts are provided by Lys-9, Phe-57, Arg-85, Thr-91, Arg-102, and Asn-112. His-115 serves as the catalytic Pros-phosphohistidine intermediate.

It belongs to the NDK family. As to quaternary structure, homotetramer. Mg(2+) is required as a cofactor.

It is found in the cytoplasm. It catalyses the reaction a 2'-deoxyribonucleoside 5'-diphosphate + ATP = a 2'-deoxyribonucleoside 5'-triphosphate + ADP. The enzyme catalyses a ribonucleoside 5'-diphosphate + ATP = a ribonucleoside 5'-triphosphate + ADP. Functionally, major role in the synthesis of nucleoside triphosphates other than ATP. The ATP gamma phosphate is transferred to the NDP beta phosphate via a ping-pong mechanism, using a phosphorylated active-site intermediate. This Listeria welshimeri serovar 6b (strain ATCC 35897 / DSM 20650 / CCUG 15529 / CIP 8149 / NCTC 11857 / SLCC 5334 / V8) protein is Nucleoside diphosphate kinase.